An 863-amino-acid polypeptide reads, in one-letter code: Alanine--tRNA ligase (863 aa).

The Zn(2+) site is built by His-552, His-556, Cys-654, and His-658.

The protein belongs to the class-II aminoacyl-tRNA synthetase family. Requires Zn(2+) as cofactor.

Its subcellular location is the cytoplasm. It carries out the reaction tRNA(Ala) + L-alanine + ATP = L-alanyl-tRNA(Ala) + AMP + diphosphate. Functionally, catalyzes the attachment of alanine to tRNA(Ala) in a two-step reaction: alanine is first activated by ATP to form Ala-AMP and then transferred to the acceptor end of tRNA(Ala). Also edits incorrectly charged Ser-tRNA(Ala) and Gly-tRNA(Ala) via its editing domain. The sequence is that of Alanine--tRNA ligase from Nitrosomonas eutropha (strain DSM 101675 / C91 / Nm57).